A 283-amino-acid polypeptide reads, in one-letter code: MEGYKSFLAFLVSSLLLGFLGVIFTLVWVLHWREGLGWDGGAAEFNWHPVLVTSGFIFIQGIAIIVYRLPWTWKCSKLLMKFIHAGLHLTALIFTIVALVAVFDFHNAKNIPNMYSLHSWIGLTVVILYALQLVLGVSIYLLPFASNTLRAALMPVHVYSGLFIFGTVIATALMGITEKLIFSLKEPPYSKLPPEAIFVNTFGLLILVFGGLVVWMVTTPAWKRPREQGMEILSPTVSSPDETEEGSTITDCSNTEKSDVELNSEAARKRILKLDEAGQRSTM.

Residues 1–5 (MEGYK) lie on the Cytoplasmic side of the membrane. A helical transmembrane segment spans residues 6-30 (SFLAFLVSSLLLGFLGVIFTLVWVL). Residues 13-218 (SSLLLGFLGV…FGGLVVWMVT (206 aa)) enclose the Cytochrome b561 domain. Residues 31-45 (HWREGLGWDGGAAEF) lie on the Extracellular side of the membrane. Residues 46–67 (NWHPVLVTSGFIFIQGIAIIVY) form a helical membrane-spanning segment. 3 residues coordinate heme b: H48, R68, and K77. Residues 68–76 (RLPWTWKCS) lie on the Cytoplasmic side of the membrane. The L-ascorbate site is built by K77 and K81. Residues 77-103 (KLLMKFIHAGLHLTALIFTIVALVAVF) traverse the membrane as a helical segment. Residue H84 coordinates heme b. The Extracellular portion of the chain corresponds to 104–116 (DFHNAKNIPNMYS). Residue H106 participates in Fe(3+) binding. Residues 113-116 (NMYS) and H118 each bind heme b. A helical transmembrane segment spans residues 117–142 (LHSWIGLTVVILYALQLVLGVSIYLL). The Cytoplasmic portion of the chain corresponds to 143–149 (PFASNTL). R150 serves as a coordination point for L-ascorbate. The chain crosses the membrane as a helical span at residues 150–177 (RAALMPVHVYSGLFIFGTVIATALMGIT). Positions 157 and 178 each coordinate heme b. Residues 178-195 (EKLIFSLKEPPYSKLPPE) are Extracellular-facing. Residues 196 to 220 (AIFVNTFGLLILVFGGLVVWMVTTP) form a helical membrane-spanning segment. Residues 221–283 (AWKRPREQGM…LDEAGQRSTM (63 aa)) lie on the Cytoplasmic side of the membrane. K223 provides a ligand contact to heme b. The disordered stretch occupies residues 234–262 (SPTVSSPDETEEGSTITDCSNTEKSDVEL). The span at 235 to 253 (PTVSSPDETEEGSTITDCS) shows a compositional bias: polar residues.

In terms of assembly, homodimer. Heme b is required as a cofactor.

Its subcellular location is the cell membrane. It is found in the apical cell membrane. The enzyme catalyses Fe(3+)(out) + L-ascorbate(in) = monodehydro-L-ascorbate radical(in) + Fe(2+)(out) + H(+). It catalyses the reaction Cu(2+)(out) + L-ascorbate(in) = Cu(+)(out) + monodehydro-L-ascorbate radical(in) + H(+). It carries out the reaction monodehydro-L-ascorbate radical(out) + L-ascorbate(in) = monodehydro-L-ascorbate radical(in) + L-ascorbate(out). In terms of biological role, plasma membrane reductase that uses cytoplasmic ascorbate as an electron donor to reduce extracellular Fe(3+) into Fe(2+). It is also able to reduce extracellular monodehydro-L-ascorbate and may be involved in extracellular ascorbate regeneration. May also function as a cupric transmembrane reductase. The polypeptide is Plasma membrane ascorbate-dependent reductase CYBRD1 (cybrd1) (Xenopus laevis (African clawed frog)).